The primary structure comprises 358 residues: Aerobic magnesium-protoporphyrin IX monomethyl ester [oxidative] cyclase (358 aa).

Belongs to the AcsF family. It depends on Fe cation as a cofactor.

The catalysed reaction is Mg-protoporphyrin IX 13-monomethyl ester + 3 NADPH + 3 O2 + 2 H(+) = 3,8-divinyl protochlorophyllide a + 3 NADP(+) + 5 H2O. The protein operates within porphyrin-containing compound metabolism; chlorophyll biosynthesis. Catalyzes the formation of the isocyclic ring in chlorophyll biosynthesis in aerobic conditions. Mediates the cyclase reaction, which results in the formation of divinylprotochlorophyllide (Pchlide) characteristic of all chlorophylls from magnesium-protoporphyrin IX 13-monomethyl ester (MgPMME). The polypeptide is Aerobic magnesium-protoporphyrin IX monomethyl ester [oxidative] cyclase (Rubrivivax gelatinosus (Rhodocyclus gelatinosus)).